The sequence spans 116 residues: UPF0102 protein LBJ_1427 (116 aa).

Belongs to the UPF0102 family.

This is UPF0102 protein LBJ_1427 from Leptospira borgpetersenii serovar Hardjo-bovis (strain JB197).